Reading from the N-terminus, the 278-residue chain is Elongation factor Ts (278 aa).

The involved in Mg(2+) ion dislocation from EF-Tu stretch occupies residues 82-85; the sequence is TDFV.

Belongs to the EF-Ts family.

Its subcellular location is the cytoplasm. In terms of biological role, associates with the EF-Tu.GDP complex and induces the exchange of GDP to GTP. It remains bound to the aminoacyl-tRNA.EF-Tu.GTP complex up to the GTP hydrolysis stage on the ribosome. The protein is Elongation factor Ts (tsf) of Streptomyces ramocissimus.